The primary structure comprises 223 residues: Imidazoleglycerol-phosphate dehydratase (223 aa).

This sequence belongs to the imidazoleglycerol-phosphate dehydratase family.

The enzyme catalyses D-erythro-1-(imidazol-4-yl)glycerol 3-phosphate = 3-(imidazol-4-yl)-2-oxopropyl phosphate + H2O. Its pathway is amino-acid biosynthesis; L-histidine biosynthesis; L-histidine from 5-phospho-alpha-D-ribose 1-diphosphate: step 6/9. This Zygosaccharomyces bailii protein is Imidazoleglycerol-phosphate dehydratase (HIS3).